The following is a 345-amino-acid chain: Phosphoribosylformylglycinamidine cyclo-ligase (345 aa).

The protein belongs to the AIR synthase family.

Its subcellular location is the cytoplasm. It carries out the reaction 2-formamido-N(1)-(5-O-phospho-beta-D-ribosyl)acetamidine + ATP = 5-amino-1-(5-phospho-beta-D-ribosyl)imidazole + ADP + phosphate + H(+). Its pathway is purine metabolism; IMP biosynthesis via de novo pathway; 5-amino-1-(5-phospho-D-ribosyl)imidazole from N(2)-formyl-N(1)-(5-phospho-D-ribosyl)glycinamide: step 2/2. The chain is Phosphoribosylformylglycinamidine cyclo-ligase from Histophilus somni (strain 2336) (Haemophilus somnus).